The following is a 579-amino-acid chain: MMNLVLQYGLYILILVVLAIPLGNYIGKIMNGEKVFLSKILTPCENFIYKMLHIDKDEDMSWKKYSFSVLAFSIISLIVLFLIHIFQGFLPLNPEKVSGTSWDLAFNNAVSFVTNTNWQGYSGESSLSYFTQMMGLTVQNFVSAAVGISVLFALIRGFIRVKQKGIGNFWMDITRTVLYILIPLSIVVSLALVSQGVVQNFKQYETVSLLEPITLEDGTVVTEEVVPLGPAASQIAIKQLGTNGGGFMGTNSAHPIENPTVLSNLFEMISLLLIPVALCFTFGRNIKDRRQGIAIFIAMGIMLVVAMGIIGVNEQMGTPQMALNGQVDLSTINQAGGNMEGKEARFGIATSSTWATFTTAASNGSVNSMHDSYTPIGGMIPMLLMQLGEVVFGGVGCGLYGMIGFAILAVFMAGLMVGRTPEYLGKKIEPFEMKMAVLVCLATPIAILIGSGIASILPETVNSLNNSGAHGFSEVLYAYTSAGGNNGSAFAGFAANTPFINISIGLSMLFARFVPMMGTLAIAGSMVKKKKVAESVGTLPTHNAMFIGLLIFVVLLIGALSFFPALALGPIAEFFQMLG.

Helical transmembrane passes span 2-22 (MNLV…AIPL), 66-86 (SFSV…IHIF), 135-155 (GLTV…FALI), 177-197 (VLYI…SQGV), 262-282 (LSNL…CFTF), 292-312 (GIAI…IIGV), 391-411 (VFGG…LAVF), 437-457 (VLVC…ASIL), 490-510 (FAGF…SMLF), and 546-566 (FIGL…FPAL).

Belongs to the KdpA family. The system is composed of three essential subunits: KdpA, KdpB and KdpC.

The protein resides in the cell membrane. Its function is as follows. Part of the high-affinity ATP-driven potassium transport (or Kdp) system, which catalyzes the hydrolysis of ATP coupled with the electrogenic transport of potassium into the cytoplasm. This subunit binds the extracellular potassium ions and delivers the ions to the membrane domain of KdpB through an intramembrane tunnel. This is Potassium-transporting ATPase potassium-binding subunit from Clostridium botulinum (strain Alaska E43 / Type E3).